Here is a 330-residue protein sequence, read N- to C-terminus: Ketol-acid reductoisomerase (NADP(+)) (330 aa).

In terms of domain architecture, KARI N-terminal Rossmann spans 1–181 (MKVFYDSDFK…GLSRAGVIQT (181 aa)). Residues 24 to 27 (YGSQ), arginine 47, serine 52, and 82 to 85 (DELQ) contribute to the NADP(+) site. Histidine 107 is a catalytic residue. Glycine 133 is a binding site for NADP(+). A KARI C-terminal knotted domain is found at 182 to 327 (TFKEETETDL…AKLRKMCGLE (146 aa)). Mg(2+)-binding residues include aspartate 190, glutamate 194, glutamate 226, and glutamate 230. Serine 251 contacts substrate.

Belongs to the ketol-acid reductoisomerase family. The cofactor is Mg(2+).

It carries out the reaction (2R)-2,3-dihydroxy-3-methylbutanoate + NADP(+) = (2S)-2-acetolactate + NADPH + H(+). The enzyme catalyses (2R,3R)-2,3-dihydroxy-3-methylpentanoate + NADP(+) = (S)-2-ethyl-2-hydroxy-3-oxobutanoate + NADPH + H(+). It participates in amino-acid biosynthesis; L-isoleucine biosynthesis; L-isoleucine from 2-oxobutanoate: step 2/4. Its pathway is amino-acid biosynthesis; L-valine biosynthesis; L-valine from pyruvate: step 2/4. Functionally, involved in the biosynthesis of branched-chain amino acids (BCAA). Catalyzes an alkyl-migration followed by a ketol-acid reduction of (S)-2-acetolactate (S2AL) to yield (R)-2,3-dihydroxy-isovalerate. In the isomerase reaction, S2AL is rearranged via a Mg-dependent methyl migration to produce 3-hydroxy-3-methyl-2-ketobutyrate (HMKB). In the reductase reaction, this 2-ketoacid undergoes a metal-dependent reduction by NADPH to yield (R)-2,3-dihydroxy-isovalerate. The polypeptide is Ketol-acid reductoisomerase (NADP(+)) (Methanococcus maripaludis (strain C7 / ATCC BAA-1331)).